Here is a 405-residue protein sequence, read N- to C-terminus: uncharacterized protein (405 aa).

The protein belongs to the UDP-glycosyltransferase family.

This is an uncharacterized protein from Bacillus subtilis (strain 168).